A 359-amino-acid chain; its full sequence is Protein disulfide-isomerase tigA (359 aa).

Residues 1–19 (MVRLSNLVSCLGLASAVTA) form the signal peptide. Thioredoxin domains are found at residues 20-129 (AVVD…EKTG) and 131-250 (KPRG…EKTG). Residues C49, C52, C169, and C172 each act as nucleophile in the active site. 2 disulfide bridges follow: C49–C52 and C169–C172. Residues 356 to 359 (KDEL) carry the Prevents secretion from ER motif.

The protein belongs to the protein disulfide isomerase family.

Its subcellular location is the endoplasmic reticulum lumen. It catalyses the reaction Catalyzes the rearrangement of -S-S- bonds in proteins.. This is Protein disulfide-isomerase tigA (tigA) from Aspergillus niger.